We begin with the raw amino-acid sequence, 745 residues long: uncharacterized protein (745 aa).

The HTH araC/xylS-type domain maps to 158–256 (NQVCDYIELH…HQTPKQYRGD (99 aa)). 2 consecutive DNA-binding regions (H-T-H motif) follow at residues 175–196 (SELS…TESL) and 223–246 (ITDI…KHFT).

This is an uncharacterized protein from Staphylococcus aureus (strain COL).